Reading from the N-terminus, the 1257-residue chain is RAF-like serine/threonine-protein kinase 24 (1257 aa).

Residues 1–21 (MDQAKGYEHVRYTAPDPRDEG) are disordered. Positions 191-277 (PRDQKLRYVG…EKPRMFLFSS (87 aa)) constitute a PB1 domain. 2 stretches are compositionally biased toward basic and acidic residues: residues 457–480 (VQDPETSSKEAKMRRDDSFQKVND) and 493–502 (KEPKMRRESS). Disordered regions lie at residues 457–629 (VQDP…RTSQ) and 761–789 (SQSEKKNVETNTPEHVSQTETSAKAVPQG). Residue serine 474 is modified to Phosphoserine. Over residues 533 to 548 (TQTSSSTPDPSSSTLS) the composition is skewed to low complexity. Over residues 550–576 (KSLRKSEDHVENNLSAKEPKMRKEHST) the composition is skewed to basic and acidic residues. Serine 555 carries the post-translational modification Phosphoserine. A compositionally biased stretch (low complexity) spans 583-593 (SVSSVSSDSMV). Residues 769-782 (ETNTPEHVSQTETS) are compositionally biased toward polar residues. Position 777 is a phosphoserine (serine 777). The 266-residue stretch at 974 to 1239 (LEELKELGSG…PEIARRLRTM (266 aa)) folds into the Protein kinase domain. ATP-binding positions include 980-988 (LGSGTFGTV) and lysine 1001. Phosphoserine is present on serine 1013. Aspartate 1102 serves as the catalytic Proton acceptor.

This sequence belongs to the protein kinase superfamily. Ser/Thr protein kinase family. In terms of processing, hyperphosphorylated in response to auxin in an ABP1- and TMK1-dependent manner.

The protein resides in the cytoplasm. It carries out the reaction L-seryl-[protein] + ATP = O-phospho-L-seryl-[protein] + ADP + H(+). The catalysed reaction is L-threonyl-[protein] + ATP = O-phospho-L-threonyl-[protein] + ADP + H(+). With respect to regulation, activated by auxin via rapid phosphorylation downstream of ABP1 and TMK1 signaling. In terms of biological role, RAF-like protein kinase acting, together with RAF20, as a central mediator of a fast response pathway to auxin involving proteins phosphorylation, and leading to rapid cellular responses including membrane depolarization and cytoplasmic streaming. Required for general growth and developmental process. In Arabidopsis thaliana (Mouse-ear cress), this protein is RAF-like serine/threonine-protein kinase 24.